The sequence spans 729 residues: Cytoplasmic polyadenylation element-binding protein 4 (729 aa).

2 disordered regions span residues 20 to 49 and 78 to 133; these read FPVR…NNNT and EKAK…KEKI. Residues 24–35 are compositionally biased toward basic residues; that stretch reads FHPHLQPPHHHQ. Residues 83-96 are compositionally biased toward low complexity; the sequence is QQQEQQDPLEKQQL. Ser-97, Ser-99, and Ser-137 each carry phosphoserine. The disordered stretch occupies residues 218–328; sequence FGGSFSPQIG…RGLNGGITPL (111 aa). Positions 232–249 are enriched in basic residues; the sequence is HHPHHPHFQHHHSQHQQQ. Residues Ser-252 and Ser-255 each carry the phosphoserine modification. Low complexity predominate over residues 285 to 300; it reads WSSYQSPSPTPSSSWS. Over residues 301–313 the composition is skewed to gly residues; that stretch reads PGGGGYGGWGGSQ. Thr-326 is subject to Phosphothreonine. 2 positions are modified to phosphoserine: Ser-330 and Ser-332. 2 RRM domains span residues 472–563 and 580–662; these read RKVF…PWNL and KTIF…PYVL. An RNA-binding region spans residues 541-543; sequence KLY. Positions 667, 675, 684, 689, 694, 697, 702, and 710 each coordinate Zn(2+).

Belongs to the RRM CPEB family. Interacts with TOB1. Expressed in pancreas in islets and ductal cells (at protein level). Expressed in melanocytes.

The protein localises to the cytoplasm. It is found in the cell projection. It localises to the dendrite. The protein resides in the dendritic spine. Its subcellular location is the postsynaptic density. The protein localises to the axon. It is found in the growth cone. It localises to the endoplasmic reticulum. The protein resides in the perinuclear region. In terms of biological role, sequence-specific RNA-binding protein that binds to the cytoplasmic polyadenylation element (CPE), an uridine-rich sequence element (consensus sequence 5'-UUUUUAU-3') within the mRNA 3'-UTR. RNA binding results in a clear conformational change analogous to the Venus fly trap mechanism. Regulates activation of unfolded protein response (UPR) in the process of adaptation to ER stress in liver, by maintaining translation of CPE-regulated mRNAs in conditions in which global protein synthesis is inhibited. Required for cell cycle progression, specifically for cytokinesis and chromosomal segregation. Plays a role as an oncogene promoting tumor growth and progression by positively regulating translation of t-plasminogen activator/PLAT. Stimulates proliferation of melanocytes. In contrast to CPEB1 and CPEB3, does not play role in synaptic plasticity, learning and memory. The polypeptide is Cytoplasmic polyadenylation element-binding protein 4 (CPEB4) (Homo sapiens (Human)).